The chain runs to 730 residues: Rap1 GTPase-activating protein 2 (730 aa).

Residues 247 to 463 (IVAYDEHEVN…RTRAALLDNL (217 aa)) enclose the Rap-GAP domain. Disordered stretches follow at residues 510-668 (MVGS…STAS) and 698-730 (SRSP…STSH). Polar residues-rich tracts occupy residues 535–557 (GEVT…QSRS) and 597–612 (HSSQ…NPSS). Basic and acidic residues predominate over residues 617 to 630 (PNKDRPFVKLKENG). Positions 631–651 (RSNISRSSSSTSSFSSTAGES) are enriched in low complexity. Residues 699–712 (RSPTDIKNRNSPRS) show a composition bias toward polar residues.

The protein resides in the cytoplasm. Its function is as follows. GTPase activator for the nuclear Ras-related regulatory protein RAP-1A (KREV-1), converting it to the putatively inactive GDP-bound state. The chain is Rap1 GTPase-activating protein 2 (RAP1GAP2) from Gallus gallus (Chicken).